The following is a 370-amino-acid chain: 3-isopropylmalate dehydrogenase (370 aa).

Residue 77 to 90 coordinates NAD(+); the sequence is GPKWDSVPYEVRPE. The substrate site is built by R97, R107, R135, and D226. The Mg(2+) site is built by D226, D250, and D254. Residue 290-302 coordinates NAD(+); the sequence is GSAPDIAGQGLAN.

It belongs to the isocitrate and isopropylmalate dehydrogenases family. LeuB type 1 subfamily. As to quaternary structure, homodimer. Mg(2+) is required as a cofactor. The cofactor is Mn(2+).

It localises to the cytoplasm. The catalysed reaction is (2R,3S)-3-isopropylmalate + NAD(+) = 4-methyl-2-oxopentanoate + CO2 + NADH. Its pathway is amino-acid biosynthesis; L-leucine biosynthesis; L-leucine from 3-methyl-2-oxobutanoate: step 3/4. Its function is as follows. Catalyzes the oxidation of 3-carboxy-2-hydroxy-4-methylpentanoate (3-isopropylmalate) to 3-carboxy-4-methyl-2-oxopentanoate. The product decarboxylates to 4-methyl-2 oxopentanoate. The chain is 3-isopropylmalate dehydrogenase from Nitrobacter winogradskyi (strain ATCC 25391 / DSM 10237 / CIP 104748 / NCIMB 11846 / Nb-255).